Here is a 1052-residue protein sequence, read N- to C-terminus: Suppressor of RPS4-RLD 1 (1052 aa).

N-acetylalanine is present on Ala2. TPR repeat units follow at residues 39 to 72 (ILDI…EPFA) and 74 to 106 (QAFI…ALQQ). Residues 107–136 (TADVKQLLELEELLKDARREIDGILKSHAT) adopt a coiled-coil conformation. The segment at 131–181 (LKSHATESPQETPAYHSEKSDEKSDKLDNHESGASSNGNSHESSSELGEQS) is disordered. Over residues 146–161 (HSEKSDEKSDKLDNHE) the composition is skewed to basic and acidic residues. The segment covering 162 to 181 (SGASSNGNSHESSSELGEQS) has biased composition (low complexity). TPR repeat units follow at residues 297–330 (VDFR…EPTY), 331–364 (PEAL…NPAA), 365–398 (SEAW…EPNS), 400–432 (DVLH…EKDN), 433–466 (KSAY…DSNY), 468–500 (EAWL…DNRV), 502–534 (KAYH…ENTI), 535–567 (ECLY…ELDA), and 569–591 (EKFV…ASKV). Residues 704–739 (STKGTTKNGKKNRRRERTNILSQNRGGAGCSSSSFS) are disordered. The helical transmembrane segment at 966–986 (GTAVTGFVVLLGLLLAANMEF) threads the bilayer.

As to quaternary structure, multimer. Interacts with EDS1. Interacts with SNC1 and RPS4. Interacts (via TPR domain) with SGT1 (via TPR domain). Interacts with the TCP transcription factors TCP8, TCP14, TCP15, TCP20, TCP22 and TCP23. As to expression, ubiquitous. Not detected in very young flowers and older siliques.

Its subcellular location is the nucleus. It localises to the cytoplasm. The protein resides in the perinuclear region. It is found in the membrane. The protein localises to the microsome. Its function is as follows. Negative regulator of effector-triggered immunity associated with the EDS1 resistance pathway. May localize its interactors to a microsomal membrane. May therefore negatively regulate RPS4 and SNC1 translocation to the nucleus. Contributes to the regulation of RPS2 and RPS4 protein levels and negatively regulates SNC1 stability. The sequence is that of Suppressor of RPS4-RLD 1 from Arabidopsis thaliana (Mouse-ear cress).